The primary structure comprises 609 residues: MIQTASTISSNGGTNQGMESSSANSPEMNGTQNSMSVGMSGSGSSQNRKITQFSNKLYNMVNDSSTDSLIRWSDRGDSFLVIGHEDFAKLVLPRYFKHNNFSSFVRQLNMYGFHKVPHIQQGVLQSDSPNELLEFANPNFQRDQPELLCLVTRKKAGSQPVEESNTSLDMSTISSELQNIRIQQMNLSNELSRIQVDNAALWQENMENRERQRRHQETIDKILRFLASVYLDGKQKPPSKVMPKSRRLLLEAKYPTVSPTNEPSAHSRPSPQGTTANSSSASISSLHNTTPDGEGKYRSVQNGRALNYVSSFNSDSHSPKDYISQSYTNEPGLKKESADSFNNSIDSYISPNQSPNTDVPSLNRDDTTDPKVVNTGDIINMLDDANSIEGSNMNSLSPLLFDYPNSLYPVNNTSSEQHHNSYRGSVSNSQPSGNLSESTNLQPVQPVDYMSNSNPSYGSYNAEDQLTNFHPGYAMDQKRISKLSDGITKQDQNIQALADILGIPLGDGKIDDAGFSANSPTNLNLPVSSDLDSVLNIPPNEDVFPDSNPVFDEFTNISNLTSPIEASNGNTFGSNPVSLPNQQKSVNPSLMTVSSPRQVRKKRKSSIGA.

A compositionally biased stretch (polar residues) spans 1–33 (MIQTASTISSNGGTNQGMESSSANSPEMNGTQN). The segment at 1-47 (MIQTASTISSNGGTNQGMESSSANSPEMNGTQNSMSVGMSGSGSSQN) is disordered. Residues 34–45 (SMSVGMSGSGSS) show a composition bias toward low complexity. The DNA-binding element occupies 50–156 (ITQFSNKLYN…LLCLVTRKKA (107 aa)). Disordered regions lie at residues 255–298 (PTVS…GKYR), 310–371 (SSFN…TDPK), 411–445 (NNTSSEQHHNSYRGSVSNSQPSGNLSESTNLQPVQ), and 567–609 (SNGN…SIGA). Polar residues-rich tracts occupy residues 257–277 (VSPTNEPSAHSRPSPQGTTAN), 339–360 (DSFNNSIDSYISPNQSPNTDVP), 422–443 (YRGSVSNSQPSGNLSESTNLQP), and 567–597 (SNGNTFGSNPVSLPNQQKSVNPSLMTVSSPR). S350 carries the post-translational modification Phosphoserine. Residues 598–609 (QVRKKRKSSIGA) are compositionally biased toward basic residues.

Belongs to the HSF family. Homotrimer.

Its subcellular location is the nucleus. Functionally, DNA-binding protein that specifically binds heat shock promoter elements (HSE) and activates transcription. Also required for growth at normal temperatures. This chain is Heat shock factor protein (hsf1), found in Schizosaccharomyces pombe (strain 972 / ATCC 24843) (Fission yeast).